The primary structure comprises 416 residues: Prostacyclin receptor (416 aa).

Residues 1–45 are Extracellular-facing; sequence MVASGGRPDGPPSITPESPLIVGGREWQGMAGSCWNITYVQDSVG. Cystine bridges form between C34-C194 and C121-C199. N-linked (GlcNAc...) asparagine glycosylation occurs at N36. Residues 46–67 traverse the membrane as a helical segment; that stretch reads PATSTLMFVAGVVGNGLALGIL. Residues 68–80 are Cytoplasmic-facing; that stretch reads GARRRSHPSAFAV. The helical transmembrane segment at 81-105 threads the bilayer; it reads LVTGLAVTDLLGTCFLSPAVFVAYA. The Extracellular portion of the chain corresponds to 106–123; the sequence is RNSSLLGLAHGGTMLCDT. The chain crosses the membrane as a helical span at residues 124 to 144; the sequence is FAFAMTFFGLASTLILFAMAV. Residues 145–163 lie on the Cytoplasmic side of the membrane; the sequence is ERCLALSHPYLYAQLDGPR. The chain crosses the membrane as a helical span at residues 164 to 187; sequence CARLALPAIYAFCCLFCSLPLLGL. The Extracellular segment spans residues 188–215; it reads GEHQQYCPGSWCFIRMRSPQPGGCAFSL. The helical transmembrane segment at 216-237 threads the bilayer; the sequence is AYASLMALLVTSIFFCNGSVTL. Residues 238-264 lie on the Cytoplasmic side of the membrane; sequence SLCHMYRQQRRHHGSFVPTSRAREDEV. A helical membrane pass occupies residues 265 to 289; it reads YHLILLALMTGIMAVCSLPLTIRGF. Residues 290–302 are Extracellular-facing; it reads TQAIAPDSREMGD. Residues 303–323 traverse the membrane as a helical segment; that stretch reads LHAFRFNAFNPILDPWVFILF. The Cytoplasmic portion of the chain corresponds to 324–416; that stretch reads RKAVFQRLKF…TEAVVACSLC (93 aa). S366 bears the Phosphoserine mark. At C413 the chain carries Cysteine methyl ester. A lipid anchor (S-farnesyl cysteine) is attached at C413. Positions 414–416 are cleaved as a propeptide — removed in mature form; the sequence is SLC.

Belongs to the G-protein coupled receptor 1 family. Interacts (non-isoprenylated C-terminus) with PDZK1. In terms of processing, isoprenylation does not influence ligand binding but is required for efficient coupling to the effectors adenylyl cyclase and phospholipase C.

Its subcellular location is the cell membrane. In terms of biological role, receptor for prostacyclin (prostaglandin I2 or PGI2). The activity of this receptor is mediated by G(s) proteins which activate adenylate cyclase. This is Prostacyclin receptor (Ptgir) from Rattus norvegicus (Rat).